A 130-amino-acid polypeptide reads, in one-letter code: Small ribosomal subunit protein uS9 (130 aa).

Belongs to the universal ribosomal protein uS9 family.

In Shigella dysenteriae serotype 1 (strain Sd197), this protein is Small ribosomal subunit protein uS9.